The chain runs to 45 residues: Metallothionein-like protein 1C (45 aa).

Belongs to the metallothionein superfamily. Type 15 family. As to expression, widely expressed at low levels.

Functionally, metallothioneins have a high content of cysteine residues that bind various heavy metals. Confers tolerance to cadmium (Cd) and plays a role in Cd and zinc (Zn) homeostasis. The protein is Metallothionein-like protein 1C (MT1C) of Arabidopsis thaliana (Mouse-ear cress).